A 207-amino-acid chain; its full sequence is Ribosomal RNA small subunit methyltransferase G (207 aa).

Residues glycine 73, leucine 78, 124 to 125, and arginine 139 each bind S-adenosyl-L-methionine; that span reads VE.

The protein belongs to the methyltransferase superfamily. RNA methyltransferase RsmG family.

Its subcellular location is the cytoplasm. The enzyme catalyses guanosine(527) in 16S rRNA + S-adenosyl-L-methionine = N(7)-methylguanosine(527) in 16S rRNA + S-adenosyl-L-homocysteine. Its function is as follows. Specifically methylates the N7 position of guanine in position 527 of 16S rRNA. This Cronobacter sakazakii (strain ATCC BAA-894) (Enterobacter sakazakii) protein is Ribosomal RNA small subunit methyltransferase G.